The following is a 277-amino-acid chain: MIIELAKNYGFCFGVKRAIKKAEQIKDAATIGPLIHNNEEISRLQKNFNVKTLENIKSLSNETKAIIRTHGITKQDLEELRKKDIEIFDATCPFVTKPQQICEQMSKEGYEIVIFGDENHPEVKGVKSYVNTKAYVVLDKKELQNIKLPSKIAVVSQTTKKPEHFMEIVNFLMLKAKEVRVFNTICDATFKNQDAIKELSLKSDVMVVVGGKNSANTKQLFLIAKTNCEDSYLIETEEELKKEWFLDKKHCGISAGASTPDWIIQKVIAKIENFGIN.

Position 12 (cysteine 12) interacts with [4Fe-4S] cluster. Residues histidine 36 and histidine 70 each coordinate (2E)-4-hydroxy-3-methylbut-2-enyl diphosphate. Positions 36 and 70 each coordinate dimethylallyl diphosphate. Histidine 36 and histidine 70 together coordinate isopentenyl diphosphate. Cysteine 92 is a binding site for [4Fe-4S] cluster. Histidine 120 is a binding site for (2E)-4-hydroxy-3-methylbut-2-enyl diphosphate. Histidine 120 provides a ligand contact to dimethylallyl diphosphate. Position 120 (histidine 120) interacts with isopentenyl diphosphate. Residue glutamate 122 is the Proton donor of the active site. Residue threonine 158 coordinates (2E)-4-hydroxy-3-methylbut-2-enyl diphosphate. Position 186 (cysteine 186) interacts with [4Fe-4S] cluster. The (2E)-4-hydroxy-3-methylbut-2-enyl diphosphate site is built by serine 214, asparagine 216, and serine 258. Residues serine 214, asparagine 216, and serine 258 each coordinate dimethylallyl diphosphate. Serine 214, asparagine 216, and serine 258 together coordinate isopentenyl diphosphate.

This sequence belongs to the IspH family. The cofactor is [4Fe-4S] cluster.

It carries out the reaction isopentenyl diphosphate + 2 oxidized [2Fe-2S]-[ferredoxin] + H2O = (2E)-4-hydroxy-3-methylbut-2-enyl diphosphate + 2 reduced [2Fe-2S]-[ferredoxin] + 2 H(+). The enzyme catalyses dimethylallyl diphosphate + 2 oxidized [2Fe-2S]-[ferredoxin] + H2O = (2E)-4-hydroxy-3-methylbut-2-enyl diphosphate + 2 reduced [2Fe-2S]-[ferredoxin] + 2 H(+). It functions in the pathway isoprenoid biosynthesis; dimethylallyl diphosphate biosynthesis; dimethylallyl diphosphate from (2E)-4-hydroxy-3-methylbutenyl diphosphate: step 1/1. Its pathway is isoprenoid biosynthesis; isopentenyl diphosphate biosynthesis via DXP pathway; isopentenyl diphosphate from 1-deoxy-D-xylulose 5-phosphate: step 6/6. In terms of biological role, catalyzes the conversion of 1-hydroxy-2-methyl-2-(E)-butenyl 4-diphosphate (HMBPP) into a mixture of isopentenyl diphosphate (IPP) and dimethylallyl diphosphate (DMAPP). Acts in the terminal step of the DOXP/MEP pathway for isoprenoid precursor biosynthesis. This chain is 4-hydroxy-3-methylbut-2-enyl diphosphate reductase, found in Campylobacter jejuni subsp. doylei (strain ATCC BAA-1458 / RM4099 / 269.97).